Here is a 488-residue protein sequence, read N- to C-terminus: 3-octaprenyl-4-hydroxybenzoate carboxy-lyase (488 aa).

Asn-172 contacts Mn(2+). Residues 175-177, 189-191, and 194-195 contribute to the prenylated FMN site; these read IYR, RWL, and RG. Glu-238 is a Mn(2+) binding site. Residue Asp-287 is the Proton donor of the active site.

Belongs to the UbiD family. In terms of assembly, homohexamer. Prenylated FMN is required as a cofactor. Mn(2+) serves as cofactor.

It is found in the cell membrane. The catalysed reaction is a 4-hydroxy-3-(all-trans-polyprenyl)benzoate + H(+) = a 2-(all-trans-polyprenyl)phenol + CO2. It functions in the pathway cofactor biosynthesis; ubiquinone biosynthesis. Catalyzes the decarboxylation of 3-octaprenyl-4-hydroxy benzoate to 2-octaprenylphenol, an intermediate step in ubiquinone biosynthesis. The sequence is that of 3-octaprenyl-4-hydroxybenzoate carboxy-lyase from Pseudomonas savastanoi pv. phaseolicola (strain 1448A / Race 6) (Pseudomonas syringae pv. phaseolicola (strain 1448A / Race 6)).